Reading from the N-terminus, the 1231-residue chain is MKEEVKGIPVRVALRCRPLVSKEIKEGCQTCLSFVPGEPQVVVGNDKSFTYDFVFDPSTEQEEVFNTAVAPLIKGVFKGYNATVLAYGQTGSGKTYSMGGAYTAEQEHDSAIGVIPRVIQLLFKEINKKSDFEFTLKVSYLEIYNEEILDLLCSSREKATQINIREDPKEGIKIVGLTEKTVLVASDTVSCLEQGNNSRTVASTAMNSQSSRSHAIFTISIEQRKKNDKNSSFRSKLHLVDLAGSERQKKTKAEGDRLREGININRGLLCLGNVISALGDDKKGNFVPYRDSKLTRLLQDSLGGNSHTLMIACVSPADSNLEETLNTLRYADRARKIKNKPIINIDPQAAELNHLKQQVQQLQILLLQAHGGTLPGDINVEPSENLQSLMEKNQSLVEENEKLSRGLSEAAGQTAQMLERIILTEQANEKMNAKLEELRRHAACKVDLQKLVETLEDQELKENIEIICNLQQVIAQLSDEAAACMTATIDTAGEADTQVQSSPDTSRSSDVFSTQHALRQAQMSKELIELNKALALKEALAKKMTQNDNQLQPIQFQYQDNIKNLESEVLSLQREKEELVLELQTAKKDANQAKLSERRRKRLQELEGQIADLKKKLQEQSKLLKLKESTEHTVSKLNQEIRMMKNQRVQLMRQMKEDAEKFRQWKQQKDKEVIQLKERDRKRQYELLKLERNFQKQSNVLRRKTEEAAAANKRLKDALQKQKEVAEKRKETQSRGMESTAARMKNWLGNEIEVMVSTEEAKRHLNGLLEERKILAQDVAQLKEKRESGENPPLKLRRRTFSYDEIHGQDSGAEDSIAKQIESLETELELRSAQIADLQQKLLDAESEDRPKQRWESIATILEAKCAIKYLVGELVSSKILVSKLESSLNQSKASCIDVQKMLFEEQNHFAKIETELKEELVKVEQQHQEKVLYLLSQLQQSQMTEKQLEESVSEKEQQLLSTLKCQEEELRKMQEVCEQNQQLLQENSAIKQKLTLLQVASKQKPHLTRNIFQSPDSSFEYIPPKPKPCRIKEKCLEQSFAVEGLQYYSEPSVAEQDNEDSDDHADEEWIPTKLVKVSKKSIQGCSCKGWCGNKQCGCRKQKSDCNVSCSCDPTKCRNRHQNQDNSDAIELNQDSENSFKLEDPTEVTSGLSFFHPICATPSSKILKEMCDADQVQLKQPVFVSSSDHPELKSIASESQENKAIGKKKKRALASNTSFFSGCSPIQEESH.

Residues 9–337 enclose the Kinesin motor domain; it reads PVRVALRCRP…LRYADRARKI (329 aa). An ATP-binding site is contributed by 88 to 95; sequence GQTGSGKT. Positions 351-1000 form a coiled coil; the sequence is ELNHLKQQVQ…IKQKLTLLQV (650 aa). Ser395 bears the Phosphoserine mark. At Thr800 the chain carries Phosphothreonine. Phosphoserine is present on residues Ser802, Ser811, and Ser816. Residues 1001-1231 are globular; the sequence is ASKQKPHLTR…GCSPIQEESH (231 aa). The disordered stretch occupies residues 1189–1212; sequence HPELKSIASESQENKAIGKKKKRA. Phosphoserine occurs at positions 1224 and 1230.

Belongs to the TRAFAC class myosin-kinesin ATPase superfamily. Kinesin family. Chromokinesin subfamily. It depends on [2Fe-2S] cluster as a cofactor. Requires [4Fe-4S] cluster as cofactor. As to expression, expressed in pyramidal cells in juvenile hippocampus, granular cells in juvenile cerebellar cortex and in adult spleen.

The protein resides in the nucleus. It is found in the chromosome. The protein localises to the cytoplasm. It localises to the cytoskeleton. In terms of biological role, iron-sulfur (Fe-S) cluster binding motor protein that has a role in chromosome segregation during mitosis. Required for mitotic chromosomal positioning and bipolar spindle stabilization. In Mus musculus (Mouse), this protein is Chromosome-associated kinesin KIF4 (Kif4).